Consider the following 632-residue polypeptide: Phospholipid:diacylglycerol acyltransferase (632 aa).

Basic residues predominate over residues 1–15 (MASSKKSKTHKKKKE). A disordered region spans residues 1 to 47 (MASSKKSKTHKKKKEVKSPIDLPNSKKPTRALSEQPSASETQSVSNK). Residues 1–56 (MASSKKSKTHKKKKEVKSPIDLPNSKKPTRALSEQPSASETQSVSNKSRKSKFGKR) are Cytoplasmic-facing. A compositionally biased stretch (polar residues) spans 32 to 46 (LSEQPSASETQSVSN). The helical transmembrane segment at 57–77 (LNFILGAILGICGAFFFAVGD) threads the bilayer. Residues 78–632 (DNAVFDPATL…NEINLDKPRN (555 aa)) lie on the Lumenal side of the membrane. Residue Asp-136 participates in substrate binding. Catalysis depends on Ser-293, which acts as the Acyl-ester intermediate. Met-294 contacts substrate. Catalysis depends on charge relay system residues Asp-535 and His-586.

It belongs to the AB hydrolase superfamily. Lipase family.

The protein localises to the endoplasmic reticulum membrane. It carries out the reaction a glycerophospholipid + a 1,2-diacyl-sn-glycerol = a monoacylglycerophospholipid + a triacyl-sn-glycerol. Its pathway is glycerolipid metabolism; triacylglycerol biosynthesis. Its function is as follows. Catalyzes triacylglycerol (TAG) formation by an acyl-CoA independent pathway. The enzyme specifically transfers acyl groups from the sn-2 position of a phospholipid to diacylglycerol (DAG), thus forming an sn-1-lysophospholipid. Plays a major role in triacylglycerol formation at log phase. Involved in lipid particle synthesis from the endoplasmic reticulum, promoting localized TAG production at discrete ER subdomains. This chain is Phospholipid:diacylglycerol acyltransferase (plh1), found in Schizosaccharomyces pombe (strain 972 / ATCC 24843) (Fission yeast).